A 270-amino-acid chain; its full sequence is MLVIEGLTCRFGSKAAVDAASFSIDRGSFVGVIGRSGAGKSTLLRMLNRLAEPSEGRILFEGVDVTALQGRELRQWRARSAMIFQQFNLVGRLDVLTNVLMGRLAHVPAWRSLAQVWPEKDRALAMSALDQFDIAPLAAQRADQLSGGQQQRVAIARALVQEPDLILADEPIASLDPRNTKVVMDALLRINKHFGITVLCNLHSLDLARSYCDRLIGMANGRIVFDGAPAELTDSIARELYDLEADDVMGSAPVHAPIGALVPQLGTVAA.

The 244-residue stretch at Leu2–Ala245 folds into the ABC transporter domain. Gly34–Ser41 provides a ligand contact to ATP.

Belongs to the ABC transporter superfamily. Phosphonates importer (TC 3.A.1.9.1) family. The complex is composed of two ATP-binding proteins (PhnC), two transmembrane proteins (PhnE) and a solute-binding protein (PhnD).

It localises to the cell inner membrane. The catalysed reaction is phosphonate(out) + ATP + H2O = phosphonate(in) + ADP + phosphate + H(+). Part of the ABC transporter complex PhnCDE involved in phosphonates import. Responsible for energy coupling to the transport system. The protein is Phosphonates import ATP-binding protein PhnC of Rhodopseudomonas palustris (strain BisB5).